A 569-amino-acid chain; its full sequence is MAGGAREVLTLQLGHFAGFVGAHWWNQQDAALGRATDAKESPGELCPDVLYRTGRTLHGQDTCTPRLILMDLKGSLSSLKEEGGLYRDKQLDAAIAWQGKLTTHKEELCPKNPYLQDFLSTEGVLSSDGVWRVKSIPNGKGSPPLTTATTPKPLIPTEASIRVWSDFLRVHLHPRSICMIQKYNHDGEAGRLEAFGQGESVLKEPKYQEELEDRLHFYVEECDYLQGFQILCDLHDGFSGVGAKAAELLQDEYSGRGIITWGLLPGPYHRGEAQRNIYRLLNTAFGLVHLTAHSSLVCPLSLGGSLGLRPEPPVNFPYLHYDATLPFHCSAILATALDTVTVPYRLCSSPVSMVHLADMLSFCGKKVVTAGATIPFPLAPGQSLPDSLMQFGGATPWTPLSACGEPSGTRCFAQSVVLRGIDRACHTSQLTPGTPPPSSLHACTTGEEVLAQYLQQQQPRVMSSSHLLLTPYRVAPPYPHLFSSCSPQGMVLDGSPKGAVESIPVFGALCSSSSLHQTLEALARDLTKLDLRRWASFMDAGVEHDDVAELLQELQSLAQCYHAGDSLVD.

Phosphoserine is present on residues serine 41 and serine 495.

Belongs to the misato family.

It is found in the mitochondrion outer membrane. The protein resides in the cytoplasm. Involved in the regulation of mitochondrial distribution and morphology. Required for mitochondrial fusion and mitochondrial network formation. The chain is Protein misato homolog 1 (MSTO1) from Macaca fascicularis (Crab-eating macaque).